Consider the following 84-residue polypeptide: MERTLRKKRNGRVVSDKMDKTVVVAVETKVRHPLYGKTINKTTKFKVHDEKNEAKINDRVLIMETRPLSKDKRWRLVEIVEKAK.

Belongs to the universal ribosomal protein uS17 family. Part of the 30S ribosomal subunit.

Its function is as follows. One of the primary rRNA binding proteins, it binds specifically to the 5'-end of 16S ribosomal RNA. This chain is Small ribosomal subunit protein uS17, found in Clostridium botulinum (strain Eklund 17B / Type B).